We begin with the raw amino-acid sequence, 122 residues long: Small ribosomal subunit protein uS13 (122 aa).

The segment at 97–122 (PVRGQRTRTNARTRKGPRKTVAKKKK) is disordered. Basic residues predominate over residues 101–122 (QRTRTNARTRKGPRKTVAKKKK).

This sequence belongs to the universal ribosomal protein uS13 family. In terms of assembly, part of the 30S ribosomal subunit. Forms a loose heterodimer with protein S19. Forms two bridges to the 50S subunit in the 70S ribosome.

In terms of biological role, located at the top of the head of the 30S subunit, it contacts several helices of the 16S rRNA. In the 70S ribosome it contacts the 23S rRNA (bridge B1a) and protein L5 of the 50S subunit (bridge B1b), connecting the 2 subunits; these bridges are implicated in subunit movement. Contacts the tRNAs in the A and P-sites. This Caldanaerobacter subterraneus subsp. tengcongensis (strain DSM 15242 / JCM 11007 / NBRC 100824 / MB4) (Thermoanaerobacter tengcongensis) protein is Small ribosomal subunit protein uS13.